The chain runs to 729 residues: Probable pre-mRNA-splicing factor ATP-dependent RNA helicase DEAH3 (729 aa).

A Helicase ATP-binding domain is found at 75–244 (LNTLNSNQTL…FSGAPLMKVP (170 aa)). 88–95 (GETGSGKT) contributes to the ATP binding site. The short motif at 191 to 194 (DEAH) is the DEAH box element. Residues 269-449 (TVVQIHMCEP…NTVLTLKKLG (181 aa)) form the Helicase C-terminal domain.

The protein belongs to the DEAD box helicase family. DEAH subfamily. PRP43 sub-subfamily.

The catalysed reaction is ATP + H2O = ADP + phosphate + H(+). In terms of biological role, may be involved in pre-mRNA splicing. The chain is Probable pre-mRNA-splicing factor ATP-dependent RNA helicase DEAH3 from Arabidopsis thaliana (Mouse-ear cress).